The following is a 161-amino-acid chain: Regulator of ribonuclease activity A (161 aa).

The protein belongs to the RraA family. Homotrimer. Binds to both RNA-binding sites in the C-terminal region of Rne and to RhlB.

Its subcellular location is the cytoplasm. In terms of biological role, globally modulates RNA abundance by binding to RNase E (Rne) and regulating its endonucleolytic activity. Can modulate Rne action in a substrate-dependent manner by altering the composition of the degradosome. Modulates RNA-binding and helicase activities of the degradosome. The chain is Regulator of ribonuclease activity A from Shewanella sediminis (strain HAW-EB3).